The following is a 244-amino-acid chain: Cysteine-rich secretory protein 2 (244 aa).

The first 21 residues, 1–21, serve as a signal peptide directing secretion; the sequence is MALLPVVVFLITMLLPCVLTN. The SCP domain maps to 43-170; the sequence is NKHNQLRKSV…SLKYYYVCQY (128 aa). Intrachain disulfides connect Cys190/Cys197, Cys193/Cys202, Cys206/Cys239, Cys215/Cys233, and Cys224/Cys237. Residues 206-239 form the ShKT domain; it reads CEYEDLLSNCESLKNTAGCEHQLLVEKCKATCRC.

The protein belongs to the CRISP family. In terms of assembly, interacts with NSUN4 isoform 3. As to expression, testis.

The protein resides in the secreted. Its function is as follows. May regulate some ion channels' activity and thereby regulate calcium fluxes during sperm capacitation. This is Cysteine-rich secretory protein 2 (CRISP2) from Cavia porcellus (Guinea pig).